The chain runs to 208 residues: dITP/XTP pyrophosphatase (208 aa).

Substrate is bound at residue 17-22; it reads SNNPGK. Residues Asp49 and Asp78 each coordinate Mg(2+). Catalysis depends on Asp78, which acts as the Proton acceptor. Substrate contacts are provided by residues Ser79, 164–167, Lys187, and 192–193; these read FGYD and HR.

This sequence belongs to the HAM1 NTPase family. In terms of assembly, homodimer. Mg(2+) is required as a cofactor.

It catalyses the reaction XTP + H2O = XMP + diphosphate + H(+). It carries out the reaction dITP + H2O = dIMP + diphosphate + H(+). The catalysed reaction is ITP + H2O = IMP + diphosphate + H(+). Functionally, pyrophosphatase that catalyzes the hydrolysis of nucleoside triphosphates to their monophosphate derivatives, with a high preference for the non-canonical purine nucleotides XTP (xanthosine triphosphate), dITP (deoxyinosine triphosphate) and ITP. Seems to function as a house-cleaning enzyme that removes non-canonical purine nucleotides from the nucleotide pool, thus preventing their incorporation into DNA/RNA and avoiding chromosomal lesions. This is dITP/XTP pyrophosphatase from Burkholderia pseudomallei (strain K96243).